A 204-amino-acid chain; its full sequence is Imidazole glycerol phosphate synthase subunit HisH 1 (204 aa).

The Glutamine amidotransferase type-1 domain maps to 5–204 (KVVIIDTGCA…AKLIQNFLEL (200 aa)). The Nucleophile role is filled by Cys80. Catalysis depends on residues His186 and Glu188.

In terms of assembly, heterodimer of HisH and HisF.

Its subcellular location is the cytoplasm. It catalyses the reaction 5-[(5-phospho-1-deoxy-D-ribulos-1-ylimino)methylamino]-1-(5-phospho-beta-D-ribosyl)imidazole-4-carboxamide + L-glutamine = D-erythro-1-(imidazol-4-yl)glycerol 3-phosphate + 5-amino-1-(5-phospho-beta-D-ribosyl)imidazole-4-carboxamide + L-glutamate + H(+). The catalysed reaction is L-glutamine + H2O = L-glutamate + NH4(+). Its pathway is amino-acid biosynthesis; L-histidine biosynthesis; L-histidine from 5-phospho-alpha-D-ribose 1-diphosphate: step 5/9. IGPS catalyzes the conversion of PRFAR and glutamine to IGP, AICAR and glutamate. The HisH subunit provides the glutamine amidotransferase activity that produces the ammonia necessary to HisF for the synthesis of IGP and AICAR. The chain is Imidazole glycerol phosphate synthase subunit HisH 1 (hisH1) from Vibrio vulnificus (strain YJ016).